Here is a 324-residue protein sequence, read N- to C-terminus: Formimidoylglutamase (324 aa).

Mn(2+) contacts are provided by His-124, Asp-153, His-155, Asp-157, Asp-245, and Asp-247.

This sequence belongs to the arginase family. It depends on Mn(2+) as a cofactor.

It carries out the reaction N-formimidoyl-L-glutamate + H2O = formamide + L-glutamate. It functions in the pathway amino-acid degradation; L-histidine degradation into L-glutamate; L-glutamate from N-formimidoyl-L-glutamate (hydrolase route): step 1/1. Its function is as follows. Catalyzes the conversion of N-formimidoyl-L-glutamate to L-glutamate and formamide. The polypeptide is Formimidoylglutamase (Hahella chejuensis (strain KCTC 2396)).